A 219-amino-acid polypeptide reads, in one-letter code: Cytidylate kinase (219 aa).

Residue 15 to 23 (GPAASGKGT) coordinates ATP.

It belongs to the cytidylate kinase family. Type 1 subfamily.

The protein localises to the cytoplasm. It carries out the reaction CMP + ATP = CDP + ADP. It catalyses the reaction dCMP + ATP = dCDP + ADP. This chain is Cytidylate kinase, found in Brucella suis biovar 1 (strain 1330).